We begin with the raw amino-acid sequence, 324 residues long: Beta-ketoacyl-[acyl-carrier-protein] synthase III (324 aa).

Catalysis depends on residues Cys112 and His249. Positions 250-254 are ACP-binding; that stretch reads QANRR. Asn279 is an active-site residue.

Belongs to the thiolase-like superfamily. FabH family. Homodimer.

It is found in the cytoplasm. The enzyme catalyses malonyl-[ACP] + acetyl-CoA + H(+) = 3-oxobutanoyl-[ACP] + CO2 + CoA. It participates in lipid metabolism; fatty acid biosynthesis. In terms of biological role, catalyzes the condensation reaction of fatty acid synthesis by the addition to an acyl acceptor of two carbons from malonyl-ACP. Catalyzes the first condensation reaction which initiates fatty acid synthesis and may therefore play a role in governing the total rate of fatty acid production. Possesses both acetoacetyl-ACP synthase and acetyl transacylase activities. Its substrate specificity determines the biosynthesis of branched-chain and/or straight-chain of fatty acids. The protein is Beta-ketoacyl-[acyl-carrier-protein] synthase III of Streptococcus pyogenes serotype M6 (strain ATCC BAA-946 / MGAS10394).